The primary structure comprises 145 residues: Transmembrane protein 170A (145 aa).

At 1–50 the chain is on the lumenal side; it reads MIEALIVGEMQDVQIGFVKQILSLNLVPRSNNTTCGNNTSLCDFSEMWYG. Residues asparagine 31 and asparagine 37 are each glycosylated (N-linked (GlcNAc...) asparagine). A helical transmembrane segment spans residues 51–71; it reads VFLWAVVSSLIFHLPAALLAL. The Cytoplasmic portion of the chain corresponds to 72-81; that stretch reads ATLRRHKVAR. The chain crosses the membrane as a helical span at residues 82-102; sequence FFPLGILLMGIIGPLFGGVLT. Over 103-117 the chain is Lumenal; that stretch reads SAAIAGVYKAAGKSM. The chain crosses the membrane as a helical span at residues 118–138; it reads FSLEALVFGVGQSLFIFIISF. Residues 139–145 are Cytoplasmic-facing; the sequence is LRILATL.

It belongs to the TMEM170 family.

It localises to the endoplasmic reticulum membrane. Its subcellular location is the nucleus envelope. In terms of biological role, may regulate membrane morphogenesis in the endoplasmic reticulum (ER) by promoting ER sheet formation at the expense of ER tubules. The sequence is that of Transmembrane protein 170A (tmem170a) from Danio rerio (Zebrafish).